The sequence spans 321 residues: Mitochondrial thiamine pyrophosphate carrier 1 (321 aa).

3 Solcar repeats span residues 12 to 110 (GSRQ…ISQM), 121 to 207 (PSSA…LKPV), and 216 to 311 (PLGS…AMGI). 6 helical membrane passes run 17–38 (VVVA…LDVI), 91–107 (LLYL…YTNI), 127–147 (FISG…LDLL), 182–199 (GLGA…LFFA), 213–231 (LPLP…ASVV), and 286–303 (GLTV…VTMW).

This sequence belongs to the mitochondrial carrier (TC 2.A.29) family.

The protein resides in the mitochondrion inner membrane. Its function is as follows. Mitochondrial transporter that mediates uptake of thiamine pyrophosphate (ThPP) into mitochondria. In Phaeosphaeria nodorum (strain SN15 / ATCC MYA-4574 / FGSC 10173) (Glume blotch fungus), this protein is Mitochondrial thiamine pyrophosphate carrier 1 (TPC1).